The sequence spans 883 residues: Phosphoenolpyruvate carboxylase (883 aa).

Active-site residues include His-138 and Lys-546.

The protein belongs to the PEPCase type 1 family. Requires Mg(2+) as cofactor.

The catalysed reaction is oxaloacetate + phosphate = phosphoenolpyruvate + hydrogencarbonate. Forms oxaloacetate, a four-carbon dicarboxylic acid source for the tricarboxylic acid cycle. In Shigella dysenteriae serotype 1 (strain Sd197), this protein is Phosphoenolpyruvate carboxylase.